A 274-amino-acid chain; its full sequence is Penicillin-insensitive murein endopeptidase (274 aa).

The signal sequence occupies residues 1-19 (MKKTVIALLAWFVSSASLA). Disulfide bonds link Cys44–Cys265, Cys187–Cys235, and Cys216–Cys223. Zn(2+) contacts are provided by His110, His113, Asp120, Asp147, His150, and His211. Positions 225–274 (DQPLPPPGDGCGAELQSWFEPPKPGTTKPEKKTPPPLPPSCQALLDEHVL) are disordered.

This sequence belongs to the peptidase M74 family. Dimer. Requires Zn(2+) as cofactor.

It is found in the periplasm. Its function is as follows. Murein endopeptidase that cleaves the D-alanyl-meso-2,6-diamino-pimelyl amide bond that connects peptidoglycan strands. Likely plays a role in the removal of murein from the sacculus. The sequence is that of Penicillin-insensitive murein endopeptidase from Salmonella paratyphi C (strain RKS4594).